A 190-amino-acid polypeptide reads, in one-letter code: Glutathione peroxidase 2 (190 aa).

Selenocysteine 40 is an active-site residue. Selenocysteine 40 is a non-standard amino acid (selenocysteine).

This sequence belongs to the glutathione peroxidase family. As to quaternary structure, homotetramer. Exclusively expressed in the stomach and small intestine.

It is found in the cytoplasm. Its subcellular location is the cytosol. It carries out the reaction 2 glutathione + H2O2 = glutathione disulfide + 2 H2O. The catalysed reaction is a hydroperoxy polyunsaturated fatty acid + 2 glutathione = a hydroxy polyunsaturated fatty acid + glutathione disulfide + H2O. It catalyses the reaction tert-butyl hydroperoxide + 2 glutathione = tert-butanol + glutathione disulfide + H2O. The enzyme catalyses cumene hydroperoxide + 2 glutathione = 2-phenylpropan-2-ol + glutathione disulfide + H2O. It carries out the reaction (13S)-hydroperoxy-(9Z,11E)-octadecadienoate + 2 glutathione = (13S)-hydroxy-(9Z,11E)-octadecadienoate + glutathione disulfide + H2O. The catalysed reaction is (5S)-hydroperoxy-(6E,8Z,11Z,14Z)-eicosatetraenoate + 2 glutathione = (5S)-hydroxy-(6E,8Z,11Z,14Z)-eicosatetraenoate + glutathione disulfide + H2O. It catalyses the reaction (12R)-hydroperoxy-(5Z,8Z,10E,14Z)-eicosatetraenoate + 2 glutathione = (12R)-hydroxy-(5Z,8Z,10E,14Z)-eicosatetraenoate + glutathione disulfide + H2O. The enzyme catalyses (15S)-hydroperoxy-(5Z,8Z,11Z,13E)-eicosatetraenoate + 2 glutathione = (15S)-hydroxy-(5Z,8Z,11Z,13E)-eicosatetraenoate + glutathione disulfide + H2O. Its function is as follows. Catalyzes the reduction of hydroperoxides in a glutathione-dependent manner thus regulating cellular redox homeostasis. Can reduce small soluble hydroperoxides such as H2O2, cumene hydroperoxide and tert-butyl hydroperoxide, as well as several fatty acid-derived hydroperoxides. Cannot reduce phosphatidycholine hydroperoxide. The sequence is that of Glutathione peroxidase 2 (GPX2) from Macaca fuscata fuscata (Japanese macaque).